Consider the following 474-residue polypeptide: HTH-type transcriptional regulator RamB (474 aa).

An HTH cro/C1-type domain is found at 10 to 64; it reads VRQLRNERGFSQAALAQMLEISPSYLNQIEHDVRPLTVAVLLRITEVFGVDATFF. The H-T-H motif DNA-binding region spans 21 to 40; sequence QAALAQMLEISPSYLNQIEH.

The protein belongs to the short-chain fatty acyl-CoA assimilation regulator (ScfR) family.

Involved in the control of the glyoxylate cycle. RamB negatively controls the expression of icl expression during growth on acetate as the sole carbon source. The sequence is that of HTH-type transcriptional regulator RamB from Mycobacterium tuberculosis (strain CDC 1551 / Oshkosh).